We begin with the raw amino-acid sequence, 368 residues long: UDP-N-acetylglucosamine--N-acetylmuramyl-(pentapeptide) pyrophosphoryl-undecaprenol N-acetylglucosamine transferase (368 aa).

UDP-N-acetyl-alpha-D-glucosamine-binding positions include 16 to 18 (TGG), Asn130, Arg171, Ser197, and Gln296.

Belongs to the glycosyltransferase 28 family. MurG subfamily.

Its subcellular location is the cell inner membrane. The enzyme catalyses di-trans,octa-cis-undecaprenyl diphospho-N-acetyl-alpha-D-muramoyl-L-alanyl-D-glutamyl-meso-2,6-diaminopimeloyl-D-alanyl-D-alanine + UDP-N-acetyl-alpha-D-glucosamine = di-trans,octa-cis-undecaprenyl diphospho-[N-acetyl-alpha-D-glucosaminyl-(1-&gt;4)]-N-acetyl-alpha-D-muramoyl-L-alanyl-D-glutamyl-meso-2,6-diaminopimeloyl-D-alanyl-D-alanine + UDP + H(+). It participates in cell wall biogenesis; peptidoglycan biosynthesis. Its function is as follows. Cell wall formation. Catalyzes the transfer of a GlcNAc subunit on undecaprenyl-pyrophosphoryl-MurNAc-pentapeptide (lipid intermediate I) to form undecaprenyl-pyrophosphoryl-MurNAc-(pentapeptide)GlcNAc (lipid intermediate II). This Acidiphilium cryptum (strain JF-5) protein is UDP-N-acetylglucosamine--N-acetylmuramyl-(pentapeptide) pyrophosphoryl-undecaprenol N-acetylglucosamine transferase.